Consider the following 512-residue polypeptide: MADTVRKKQKLVVVGAGPVGSLAALYAAARGDEVEIYELRGDLRDPSTVPLNFTKSINLALSERGITAMKHSNREDLVNNVLRDTIPMHGRMIHGRDRGKLWEAAQAYDVHGRAINAVDRSTLNNALLDELECTPNVKLFFNHKLTGADFNARKAWFERRVPGEAPLPNSANRVPEIEVDFDFMIGADGAHSAARYHMMKFARVDYQQEYIDTLWCEFRIPPTEDGDFRISPNHLHIWPGREFMFIALPSADKSFTCTLFAPAAHYKHLGSSPQNLVESFKDHFPGVCPELISPEDLQEQFTTNPHLPLISLKCKPHHYNSSIVIVGDAAHAVLPFYGQGLNAGLEDIRVLFECLDKHGSYNLDASPDARREARAKAFQAYTDQRCADTHAINDLSKQNYLEMRWGVKTPLYKLRKSVEEALDRYVPSLGWQTQYSRVSFSNQRYSDVIRSARWQGRILALGLATTLISTVGVIAYVFWKKPRQYSPLSLLRYSWRRLSSIWVTMFRTIAYA.

This sequence belongs to the aromatic-ring hydroxylase family. KMO subfamily. The cofactor is FAD.

It is found in the mitochondrion outer membrane. It carries out the reaction L-kynurenine + NADPH + O2 + H(+) = 3-hydroxy-L-kynurenine + NADP(+) + H2O. The protein operates within cofactor biosynthesis; NAD(+) biosynthesis; quinolinate from L-kynurenine: step 1/3. Catalyzes the hydroxylation of L-kynurenine (L-Kyn) to form 3-hydroxy-L-kynurenine (L-3OHKyn). Required for synthesis of quinolinic acid. This chain is Kynurenine 3-monooxygenase (bna4), found in Aspergillus fumigatus (strain ATCC MYA-4609 / CBS 101355 / FGSC A1100 / Af293) (Neosartorya fumigata).